A 54-amino-acid polypeptide reads, in one-letter code: Large ribosomal subunit protein bL32c (54 aa).

This sequence belongs to the bacterial ribosomal protein bL32 family.

It is found in the plastid. The protein resides in the chloroplast. The chain is Large ribosomal subunit protein bL32c from Cucumis sativus (Cucumber).